Consider the following 831-residue polypeptide: Protein ADP-ribosyltransferase PARP3 (831 aa).

The tract at residues 1–69 (MVHETRSRTL…KKLKAEESDL (69 aa)) is disordered. Basic and acidic residues-rich tracts occupy residues 15–32 (EEGKAAPKKQKTESKEQE) and 43–66 (KTADNEEHDGEQEPSKNKKLKAEE). The region spanning 49–199 (EHDGEQEPSK…NKYPKRNLDD (151 aa)) is the PADR1 zinc-binding domain. A zinc ribbon region spans residues 124–168 (GPLDKCPVCGGQLECKGLKYNCTGTHSEWACCSFSTNNPSRRGGP). Cysteine 129, cysteine 132, cysteine 145, and cysteine 155 together coordinate Zn(2+). The 91-residue stretch at 200–290 (EGIFSGMMIA…EKQPLAAYDI (91 aa)) folds into the BRCT domain. Residues 338–439 (GGHIYEKDGI…KKFKKKCMKM (102 aa)) form the WGR domain. The 120-residue stretch at 466-585 (HCKLDPSVTF…DINVASRLIG (120 aa)) folds into the PARP alpha-helical domain. One can recognise a PARP catalytic domain in the interval 594–827 (DPLSQCYKKL…VKYEEQNMEV (234 aa)).

It belongs to the ARTD/PARP family.

The protein localises to the nucleus. It carries out the reaction L-aspartyl-[protein] + NAD(+) = 4-O-(ADP-D-ribosyl)-L-aspartyl-[protein] + nicotinamide. It catalyses the reaction L-glutamyl-[protein] + NAD(+) = 5-O-(ADP-D-ribosyl)-L-glutamyl-[protein] + nicotinamide. Involved in the base excision repair (BER) pathway, by catalyzing the poly(ADP-ribosyl)ation of a limited number of acceptor proteins involved in chromatin architecture and in DNA metabolism. This modification follows DNA damages and appears as an obligatory step in a detection/signaling pathway leading to the reparation of DNA strand breaks. The protein is Protein ADP-ribosyltransferase PARP3 (PARP3) of Oryza sativa subsp. japonica (Rice).